Here is a 354-residue protein sequence, read N- to C-terminus: Kelch domain-containing protein 8B (354 aa).

Kelch repeat units lie at residues 1–31, 32–79, 81–127, 128–175, 176–222, 224–281, 282–329, and 331–354; these read MAAG…HQDG, HLLV…VLGK, VLVV…ERDG, MVYA…LHGN, KIYV…MAEG, VFSL…SLGG, NIVA…QAGP, and LFVI…RDGV.

It localises to the cytoplasm. It is found in the midbody. In terms of biological role, involved in pinching off the separated nuclei at the cleavage furrow and in cytokinesis. Required for mitotic integrity and maintenance of chromosomal stability. Protects cells against mitotic errors, centrosomal amplification, micronucleus formation and aneuploidy. Plays a key role of midbody function involving abscission of the daughter cells during cytokinesis and appropriate chromosomal and nuclear segregation into the daughter cells. The sequence is that of Kelch domain-containing protein 8B (Klhdc8b) from Mus musculus (Mouse).